The sequence spans 345 residues: DNA primase small subunit PriS (345 aa).

Residues aspartate 95 and aspartate 97 contribute to the active site. Residues cysteine 106, histidine 108, cysteine 114, and cysteine 117 each coordinate Zn(2+). Residues cysteine 106–cysteine 117 carry the Zinc knuckle motif motif. Aspartate 280 is an active-site residue.

This sequence belongs to the eukaryotic-type primase small subunit family. In terms of assembly, heterodimer of a small subunit (PriS) and a large subunit (PriL). Mg(2+) serves as cofactor. Mn(2+) is required as a cofactor.

Functionally, catalytic subunit of DNA primase, an RNA polymerase that catalyzes the synthesis of short RNA molecules used as primers for DNA polymerase during DNA replication. The small subunit contains the primase catalytic core and has DNA synthesis activity on its own, synthesizing DNA strands up to 3 kB. Binding to the large subunit stabilizes and modulates the activity, increasing the rate of DNA synthesis while decreasing the length of the DNA fragments, and conferring RNA synthesis capability for RNA fragments up to 150 bases. The DNA polymerase activity may enable DNA primase to also catalyze primer extension after primer synthesis. May also play a role in DNA repair. Displays gap-filling and strand-displacement activities. The chain is DNA primase small subunit PriS from Pyrococcus abyssi (strain GE5 / Orsay).